We begin with the raw amino-acid sequence, 69 residues long: Sec-independent protein translocase protein TatA (69 aa).

A helical membrane pass occupies residues 1–21; the sequence is MFGLGGQELVLILLIILLLFG. The tract at residues 48-69 is disordered; that stretch reads EELNKAVDDTPEKEKKSSSEKS.

The protein belongs to the TatA/E family. Forms a complex with TatC.

Its subcellular location is the cell inner membrane. Its function is as follows. Part of the twin-arginine translocation (Tat) system that transports large folded proteins containing a characteristic twin-arginine motif in their signal peptide across membranes. TatA could form the protein-conducting channel of the Tat system. In Chlorobium phaeobacteroides (strain BS1), this protein is Sec-independent protein translocase protein TatA.